Reading from the N-terminus, the 138-residue chain is Cysteine desulfuration protein SufE (138 aa).

The active-site Cysteine persulfide intermediate is the Cys51.

The protein belongs to the SufE family. In terms of assembly, homodimer. Interacts with SufS.

Its subcellular location is the cytoplasm. The protein operates within cofactor biosynthesis; iron-sulfur cluster biosynthesis. In terms of biological role, participates in cysteine desulfuration mediated by SufS. Cysteine desulfuration mobilizes sulfur from L-cysteine to yield L-alanine and constitutes an essential step in sulfur metabolism for biosynthesis of a variety of sulfur-containing biomolecules. Functions as a sulfur acceptor for SufS, by mediating the direct transfer of the sulfur atom from the S-sulfanylcysteine of SufS, an intermediate product of cysteine desulfuration process. The chain is Cysteine desulfuration protein SufE from Klebsiella pneumoniae (strain 342).